The following is a 566-amino-acid chain: Folate-like transporter DDB_G0272544 (566 aa).

The stretch at 24 to 81 forms a coiled coil; the sequence is RNQDEDENENENNDNLENDNNKRNYISINNYEPYKEIDNNNNKNNNNNNIINNNNKIN. The segment at 25–46 is disordered; sequence NQDEDENENENNDNLENDNNKR. Positions 27–40 are enriched in acidic residues; the sequence is DEDENENENNDNLE. The next 11 helical transmembrane spans lie at 148–168, 171–191, 194–214, 226–246, 252–272, 304–324, 332–352, 364–384, 388–408, 420–440, and 458–478; these read VFLLIFGILGEIIGYKVIIII, VAKILTIGVLLSTNNIIWMIL, ITEGLSYSAYTVFLAYIYFSL, VNAGYLVGIVSSGLLGQLLVE, VYLLSIACGTNILALILALGF, IWSGIAISIHQIVITYWQNLF, SWNGYISASAYFFASFFAIIP, GIILVLFGLLGGGLLVLMGFG, VVSALSFIIYNCCFEFVSPIV, IGVLFSFNIMVALTIQVLVQS, and YGACLFFLSFGFAILFGFLFL. The stretch at 517–544 forms a coiled coil; the sequence is YNANIIDFENNNNNNNNNNNNNNNNNNN. A compositionally biased stretch (low complexity) spans 526–556; it reads NNNNNNNNNNNNNNNNNNNNNNNNNNNNNNN. The tract at residues 526-566 is disordered; sequence NNNNNNNNNNNNNNNNNNNNNNNNNNNNNNNVGIGGNDNFK.

The protein belongs to the reduced folate carrier (RFC) transporter (TC 2.A.48) family.

Its subcellular location is the membrane. Its function is as follows. Folate transporter. The sequence is that of Folate-like transporter DDB_G0272544 from Dictyostelium discoideum (Social amoeba).